Consider the following 351-residue polypeptide: Alcohol dehydrogenase 5 (351 aa).

7 residues coordinate Zn(2+): C47, H70, C101, C104, C107, C115, and C183. Residues 181–187 (GACGGLG), D205, K210, 272–274 (VGM), and R344 each bind NAD(+).

It belongs to the zinc-containing alcohol dehydrogenase family. The cofactor is Zn(2+).

The enzyme catalyses a primary alcohol + NAD(+) = an aldehyde + NADH + H(+). It carries out the reaction a secondary alcohol + NAD(+) = a ketone + NADH + H(+). The protein is Alcohol dehydrogenase 5 (ADH5) of Saccharomyces pastorianus (Lager yeast).